A 364-amino-acid polypeptide reads, in one-letter code: Dihydroorotate dehydrogenase (quinone) (364 aa).

Residues 61-65 (AGYDK) and T85 contribute to the FMN site. K65 lines the substrate pocket. Substrate is bound at residue 110–114 (NRLGF). FMN contacts are provided by N139 and N170. Residue N170 coordinates substrate. S173 acts as the Nucleophile in catalysis. N175 is a substrate binding site. FMN contacts are provided by K215 and S243. A substrate-binding site is contributed by 244-245 (NT). FMN contacts are provided by residues G266, G295, and 316-317 (YT).

This sequence belongs to the dihydroorotate dehydrogenase family. Type 2 subfamily. In terms of assembly, monomer. FMN serves as cofactor.

The protein resides in the cell membrane. It carries out the reaction (S)-dihydroorotate + a quinone = orotate + a quinol. The protein operates within pyrimidine metabolism; UMP biosynthesis via de novo pathway; orotate from (S)-dihydroorotate (quinone route): step 1/1. Catalyzes the conversion of dihydroorotate to orotate with quinone as electron acceptor. This chain is Dihydroorotate dehydrogenase (quinone), found in Brucella anthropi (strain ATCC 49188 / DSM 6882 / CCUG 24695 / JCM 21032 / LMG 3331 / NBRC 15819 / NCTC 12168 / Alc 37) (Ochrobactrum anthropi).